The primary structure comprises 178 residues: Gamma-crystallin S (178 aa).

Ser-2 bears the N-acetylserine mark. Residues 2 to 5 form an N-terminal arm region; that stretch reads SKTG. Beta/gamma crystallin 'Greek key' domains are found at residues 6–44 and 45–87; these read GKIS…RVEG and GTWA…RAVH. Positions 88-93 are connecting peptide; the sequence is LSSGGQ. Beta/gamma crystallin 'Greek key' domains lie at 94-134 and 135-177; these read AKIQ…KVVE and GTWI…RRIV.

The protein belongs to the beta/gamma-crystallin family. Monomer.

Functionally, crystallins are the dominant structural components of the vertebrate eye lens. The chain is Gamma-crystallin S (Crygs) from Mus musculus (Mouse).